Here is a 237-residue protein sequence, read N- to C-terminus: Uridylate kinase (237 aa).

Residue 12–15 (KLSG) coordinates ATP. Residues 20-25 (GEDGLG) are involved in allosteric activation by GTP. Residue Gly54 participates in UMP binding. Gly55 and Arg59 together coordinate ATP. UMP contacts are provided by residues Asp74 and 135–142 (TGNPFFTT). ATP is bound by residues Thr162, Tyr168, and Asp171.

It belongs to the UMP kinase family. In terms of assembly, homohexamer.

It localises to the cytoplasm. The catalysed reaction is UMP + ATP = UDP + ADP. The protein operates within pyrimidine metabolism; CTP biosynthesis via de novo pathway; UDP from UMP (UMPK route): step 1/1. Allosterically activated by GTP. Inhibited by UTP. Functionally, catalyzes the reversible phosphorylation of UMP to UDP. The protein is Uridylate kinase of Haemophilus influenzae (strain PittEE).